Consider the following 1107-residue polypeptide: Unconventional myosin-Ib (1107 aa).

Positions 15 to 701 (IGVGDMVLLE…TLFQLEDLRK (687 aa)) constitute a Myosin motor domain. Residue serine 60 is modified to Phosphoserine. 108–115 (GESGAGKT) is an ATP binding site. Lysine 287 is covalently cross-linked (Glycyl lysine isopeptide (Lys-Gly) (interchain with G-Cter in SUMO1); alternate). A Glycyl lysine isopeptide (Lys-Gly) (interchain with G-Cter in SUMO2); alternate cross-link involves residue lysine 287. Residues 592 to 599 (YIRCIKPN) are actin-binding. IQ domains lie at 704-727 (LEDL…FLLM), 728-749 (KRSQ…RYQQ), 750-778 (IKSS…HQKR), 780-807 (KEAA…EEAR), and 808-837 (RKHA…ANAG). Positions 923 to 1107 (KALYPSSVGQ…NNRLLEVAVP (185 aa)) constitute a TH1 domain.

This sequence belongs to the TRAFAC class myosin-kinesin ATPase superfamily. Myosin family. In terms of tissue distribution, prominent expression is seen in the brain, lung and liver. It is also expressed in the heart and testis. A high level expression is seen in virtually all neurons (but not glia) in the postnatal and adult mouse brain and in neuroblasts of the cerebellar external granular layer.

Motor protein that may participate in process critical to neuronal development and function such as cell migration, neurite outgrowth and vesicular transport. The chain is Unconventional myosin-Ib (Myo1b) from Mus musculus (Mouse).